The chain runs to 565 residues: Periplasmic trehalase (565 aa).

Positions 1–30 (MKSPAPSRPQKMALIPACIFLCFAALSVQA) are cleaved as a signal peptide. Substrate contacts are provided by residues arginine 152, 159–160 (WD), asparagine 196, 205–207 (RSQ), 277–279 (RPE), and glycine 310. Catalysis depends on proton donor/acceptor residues aspartate 312 and glutamate 496. A substrate-binding site is contributed by glutamate 511. Residues 540–565 (DNVPATHPTVKSATTQPSTKEAQPTP) form a disordered region. Residues 548-565 (TVKSATTQPSTKEAQPTP) are compositionally biased toward polar residues.

This sequence belongs to the glycosyl hydrolase 37 family. As to quaternary structure, monomer.

It is found in the periplasm. It catalyses the reaction alpha,alpha-trehalose + H2O = alpha-D-glucose + beta-D-glucose. Provides the cells with the ability to utilize trehalose at high osmolarity by splitting it into glucose molecules that can subsequently be taken up by the phosphotransferase-mediated uptake system. The protein is Periplasmic trehalase of Shigella flexneri.